A 374-amino-acid chain; its full sequence is Ribosomal RNA large subunit methyltransferase G (374 aa).

It belongs to the methyltransferase superfamily. RlmG family.

The protein resides in the cytoplasm. The enzyme catalyses guanosine(1835) in 23S rRNA + S-adenosyl-L-methionine = N(2)-methylguanosine(1835) in 23S rRNA + S-adenosyl-L-homocysteine + H(+). Its function is as follows. Specifically methylates the guanine in position 1835 (m2G1835) of 23S rRNA. The sequence is that of Ribosomal RNA large subunit methyltransferase G from Pseudomonas paraeruginosa (strain DSM 24068 / PA7) (Pseudomonas aeruginosa (strain PA7)).